Consider the following 87-residue polypeptide: Putative phytosulfokines 4 (87 aa).

The signal sequence occupies residues 1-23 (MANLSTLITIALLLCATMLTCSA). Residues 24–77 (RPEPAYFASFTTSPADTLSLEMIESKLHEVAGESCDKEDDEDCLVRRTLTAHLD) constitute a propeptide that is removed on maturation. A sulfotyrosine mark is found at Y78 and Y80. Positions 83 to 87 (KNNHH) are excised as a propeptide.

It belongs to the phytosulfokine family. Post-translationally, sulfation is important for activity and for the binding to a putative membrane receptor.

It is found in the secreted. Functionally, promotes plant cell differentiation, organogenesis and somatic embryogenesis as well as cell proliferation. This is Putative phytosulfokines 4 (PSK4) from Arabidopsis thaliana (Mouse-ear cress).